The following is a 755-amino-acid chain: Polyribonucleotide nucleotidyltransferase (755 aa).

Mg(2+) contacts are provided by aspartate 493 and aspartate 499. The region spanning 560–619 is the KH domain; it reads PRIMTIQIPVDKIGALIGPGGKTIRNICDTTGAQIDIEDDGRVFITAPDGEAAKKAISMI. Residues 629 to 698 enclose the S1 motif domain; the sequence is GDIFLGKVVS…NTGKISLSRR (70 aa). The interval 704 to 755 is disordered; that stretch reads ETPEARKAAGAAPRPRPREEQRGGREEPRSLREELRGPRRDGERPRPRRRDD. The span at 719–755 shows a compositional bias: basic and acidic residues; that stretch reads RPREEQRGGREEPRSLREELRGPRRDGERPRPRRRDD.

Belongs to the polyribonucleotide nucleotidyltransferase family. Mg(2+) is required as a cofactor.

Its subcellular location is the cytoplasm. The catalysed reaction is RNA(n+1) + phosphate = RNA(n) + a ribonucleoside 5'-diphosphate. In terms of biological role, involved in mRNA degradation. Catalyzes the phosphorolysis of single-stranded polyribonucleotides processively in the 3'- to 5'-direction. The chain is Polyribonucleotide nucleotidyltransferase from Chloroflexus aggregans (strain MD-66 / DSM 9485).